Reading from the N-terminus, the 1780-residue chain is Callose synthase 12 (1780 aa).

The Cytoplasmic segment spans residues 1-302 (MSLRHRTVPP…ERRTFFYLYR (302 aa)). The helical transmembrane segment at 303–323 (SFDRLWVMLALFLQAAIIVAW) threads the bilayer. Residues 324-348 (EEKPDTSSVTRQLWNALKARDVQVR) are Extracellular-facing. Residues 349-369 (LLTVFLTWSGMRLLQAVLDAA) form a helical membrane-spanning segment. Over 370–386 (SQYPLVSRETKRHFFRM) the chain is Cytoplasmic. The helical transmembrane segment at 387–407 (LMKVIAAAVWIVAFTVLYTNI) threads the bilayer. Residues 408-427 (WKQKRQDRQWSNAATTKIYQ) are Extracellular-facing. The helical transmembrane segment at 428 to 448 (FLYAVGAFLVPEILALALFII) threads the bilayer. At 449-489 (PWMRNFLEETNWKIFFALTWWFQGKSFVGRGLREGLVDNIK) the chain is on the cytoplasmic side. The chain crosses the membrane as a helical span at residues 490-510 (YSTFWIFVLATKFTFSYFLQV). At 511–542 (KPMIKPSKLLWNLKDVDYEWHQFYGDSNRFSV) the chain is on the extracellular side. Residues 543 to 563 (ALLWLPVVLIYLMDIQIWYAI) form a helical membrane-spanning segment. At 564 to 1348 (YSSIVGAVVG…FFRMLSFFYT (785 aa)) the chain is on the cytoplasmic side. The chain crosses the membrane as a helical span at residues 1349–1369 (TVGFFFNTMMVILTVYAFLWG). Residues 1370-1394 (RVYLALSGVEKSALADSTDTNAALG) lie on the Extracellular side of the membrane. The helical transmembrane segment at 1395-1415 (VILNQQFIIQLGLFTALPMIV) threads the bilayer. Topologically, residues 1416 to 1421 (EWSLEE) are cytoplasmic. A helical membrane pass occupies residues 1422-1442 (GFLLAIWNFIRMQIQLSAVFY). Residues 1443–1489 (TFSMGTRAHYFGRTILHGGAKYRATGRGFVVEHKGFTENYRLYARSH) lie on the Extracellular side of the membrane. The helical transmembrane segment at 1490–1510 (FVKAIELGLILIVYASHSPIA) threads the bilayer. Residues 1511-1516 (KDSLIY) lie on the Cytoplasmic side of the membrane. A helical transmembrane segment spans residues 1517 to 1537 (IAMTITSWFLVISWIMAPFVF). The Extracellular segment spans residues 1538-1588 (NPSGFDWLKTVYDFEDFMNWIWYQGRISTKSEQSWEKWWYEEQDHLRNTGK). The chain crosses the membrane as a helical span at residues 1589 to 1609 (AGLFVEIILVLRFFFFQYGIV). At 1610-1620 (YQLKIANGSTS) the chain is on the cytoplasmic side. A helical transmembrane segment spans residues 1621–1641 (LFVYLFSWIYIFAIFVLFLVI). The Extracellular portion of the chain corresponds to 1642–1657 (QYARDKYSAKAHIRYR). A helical transmembrane segment spans residues 1658–1678 (LVQFLLIVLAILVIVALLEFT). The Cytoplasmic portion of the chain corresponds to 1679 to 1681 (HFS). Residues 1682–1702 (FIDIFTSLLAFIPTGWGILLI) form a helical membrane-spanning segment. Topologically, residues 1703-1728 (AQTQRKWLKNYTIFWNAVVSVARMYD) are extracellular. The N-linked (GlcNAc...) asparagine glycan is linked to Asn1712. The chain crosses the membrane as a helical span at residues 1729–1749 (ILFGILIMVPVAFLSWMPGFQ). At 1750–1780 (SMQTRILFNEAFSRGLRIMQIVTGKKSKGDV) the chain is on the cytoplasmic side.

This sequence belongs to the glycosyltransferase 48 family. In terms of tissue distribution, highly expressed in flowers. Expressed at low levels in roots, leaves, stems, cauline leaves and siliques.

It is found in the cell membrane. It catalyses the reaction [(1-&gt;3)-beta-D-glucosyl](n) + UDP-alpha-D-glucose = [(1-&gt;3)-beta-D-glucosyl](n+1) + UDP + H(+). Involved in sporophytic and gametophytic development. Required for normal leaf development. During pollen formation, required for the formation of the callose wall separating the tetraspores of the tetrad (interstitial wall), but not for the callose wall surrounding the pollen mother cells (peripheral wall). Functionally redudant to CALS11 (GSL1). May play a role later in pollen grain maturation. Required for callose formation induced by wounding and pathogen attack. May interfere with salicylic acid-induced signaling pathway during defense response. During plant growth and development, callose is found as a transitory component of the cell plate in dividing cells, is a major component of pollen mother cell walls and pollen tubes, and is found as a structural component of plasmodesmatal canals. This is Callose synthase 12 (CALS12) from Arabidopsis thaliana (Mouse-ear cress).